Reading from the N-terminus, the 361-residue chain is Protein-L-isoaspartate O-methyltransferase domain-containing protein 2 (361 aa).

Gly-2 carries the N-myristoyl glycine lipid modification. Ser-64 is a catalytic residue. AdoMet binding motif regions lie at residues 85–94 (LNLGSGTGYL), 160–164 (YDRVY), and 181–191 (LKVGGILVMPL). The tract at residues 240–250 (VRSLQDLARIA) is BC-box. Residues 303-312 (SNPSDDNSSG) show a composition bias toward polar residues. The interval 303–335 (SNPSDDNSSGDLEEERREEEATTPPDAKPEPPV) is disordered. The interval 345 to 348 (LPLP) is CUL-box.

This sequence belongs to the methyltransferase superfamily. L-isoaspartyl/D-aspartyl protein methyltransferase family.

Its subcellular location is the cytoplasm. Functionally, may act as a substrate recognition component of an ECS (Elongin BC-CUL5-SOCS-box protein) E3 ubiquitin ligase complex which mediates the ubiquitination and subsequent proteasomal degradation of target proteins. May bind to the methyltransferase cofactor S-adenosylmethionine (AdoMet) via the N-terminal AdoMet binding motif, but probably does not display methyltransferase activity. The polypeptide is Protein-L-isoaspartate O-methyltransferase domain-containing protein 2 (PCMTD2) (Bos taurus (Bovine)).